We begin with the raw amino-acid sequence, 154 residues long: SsrA-binding protein (154 aa).

It belongs to the SmpB family.

It is found in the cytoplasm. Required for rescue of stalled ribosomes mediated by trans-translation. Binds to transfer-messenger RNA (tmRNA), required for stable association of tmRNA with ribosomes. tmRNA and SmpB together mimic tRNA shape, replacing the anticodon stem-loop with SmpB. tmRNA is encoded by the ssrA gene; the 2 termini fold to resemble tRNA(Ala) and it encodes a 'tag peptide', a short internal open reading frame. During trans-translation Ala-aminoacylated tmRNA acts like a tRNA, entering the A-site of stalled ribosomes, displacing the stalled mRNA. The ribosome then switches to translate the ORF on the tmRNA; the nascent peptide is terminated with the 'tag peptide' encoded by the tmRNA and targeted for degradation. The ribosome is freed to recommence translation, which seems to be the essential function of trans-translation. In Staphylococcus saprophyticus subsp. saprophyticus (strain ATCC 15305 / DSM 20229 / NCIMB 8711 / NCTC 7292 / S-41), this protein is SsrA-binding protein.